The chain runs to 619 residues: Keratin, type II cytoskeletal 1 (619 aa).

The tract at residues 1–180 (MSRHFSSRSG…DPEIQKVKTR (180 aa)) is head. At Arg12 the chain carries Omega-N-methylarginine. Residues Ser18 and Ser21 each carry the phosphoserine modification. Positions 28-49 (QRRTTSSSVRHSGGGGGRFSGG) are disordered. Gly residues predominate over residues 39-49 (SGGGGGRFSGG). Position 45 is an omega-N-methylarginine (Arg45). Position 68 is a phosphoserine (Ser68). The stretch at 173-477 (EIQKVKTRER…ELMNTKLALD (305 aa)) forms a coiled coil. The segment at 181–216 (EREQIKSLNNQFASFIDKVRFLEQQNQVLQTKWELL) is coil 1A. The IF rod domain maps to 181–494 (EREQIKSLNN…TLLEGEESRM (314 aa)). The tract at residues 217 to 235 (QQVDTSTRTHSLEPYFENY) is linker 1. Positions 236–327 (ISNLRRRVDQ…TLYQAELSQM (92 aa)) are coil 1B. Lys277 carries the N6,N6-dimethyllysine modification. A linker 12 region spans residues 328–351 (QTQISETNVILSMDNNRSLDLDSI). Ser345 is modified (phosphoserine). Residues 352-490 (ISEVKAQYEE…ATYRTLLEGE (139 aa)) are coil 2. The tail stretch occupies residues 491 to 619 (ESRMSGECAP…VSTSYSRAVR (129 aa)). An omega-N-methylarginine mark is found at Arg519 and Arg575. Residues 559–619 (GGGGGGYGSS…VSTSYSRAVR (61 aa)) form a disordered region. The segment covering 573 to 595 (GHRGGSGGGSRSGGSSGGRGSSS) has biased composition (gly residues). Over residues 596-606 (GGIKTSSGSSS) the composition is skewed to low complexity. Residues 607-619 (VKFVSTSYSRAVR) are compositionally biased toward polar residues.

It belongs to the intermediate filament family. As to quaternary structure, heterotetramer of two type I and two type II keratins. Heterodimer with KRT10. Two heterodimers of KRT1 and KRT10 form a heterotetramer. Forms a heterodimer with KRT14; the interaction is more abundant in the absence of KRT5. Interacts with ITGB1 in the presence of RACK1 and SRC, and with RACK1. Interacts with C1QBP; the association represents a cell surface kininogen receptor. Interacts with EPPK1; interaction is dependent of higher-order structure of intermediate filament. In terms of processing, undergoes deimination of some arginine residues (citrullination).

It localises to the cell membrane. The protein resides in the cytoplasm. In terms of biological role, may regulate the activity of kinases such as PKC and SRC via binding to integrin beta-1 (ITB1) and the receptor of activated protein C kinase 1 (RACK1). In complex with C1QBP is a high affinity receptor for kininogen-1/HMWK. In Canis lupus familiaris (Dog), this protein is Keratin, type II cytoskeletal 1.